Consider the following 263-residue polypeptide: Phosphatidylglycerol--prolipoprotein diacylglyceryl transferase (263 aa).

The next 4 membrane-spanning stretches (helical) occupy residues 15–35, 52–72, 83–103, and 112–132; these read ISIH…VYLA, FILL…VIFQ, IFAI…GAAV, and AIAV…AQSI. Position 134 (arginine 134) interacts with a 1,2-diacyl-sn-glycero-3-phospho-(1'-sn-glycerol). Helical transmembrane passes span 170–190, 200–220, and 230–250; these read VPTF…ILGL, GDVT…IEGM, and LRVS…LLYF.

This sequence belongs to the Lgt family.

The protein localises to the cell membrane. It carries out the reaction L-cysteinyl-[prolipoprotein] + a 1,2-diacyl-sn-glycero-3-phospho-(1'-sn-glycerol) = an S-1,2-diacyl-sn-glyceryl-L-cysteinyl-[prolipoprotein] + sn-glycerol 1-phosphate + H(+). It participates in protein modification; lipoprotein biosynthesis (diacylglyceryl transfer). Catalyzes the transfer of the diacylglyceryl group from phosphatidylglycerol to the sulfhydryl group of the N-terminal cysteine of a prolipoprotein, the first step in the formation of mature lipoproteins. The chain is Phosphatidylglycerol--prolipoprotein diacylglyceryl transferase from Streptococcus thermophilus (strain ATCC BAA-250 / LMG 18311).